Reading from the N-terminus, the 389-residue chain is Fructose-1,6-bisphosphate aldolase/phosphatase (389 aa).

D17 functions as the Proton acceptor; for FBP phosphatase activity in the catalytic mechanism. 4 residues coordinate Mg(2+): D17, H24, D57, and D58. H24 is a beta-D-fructose 1,6-bisphosphate binding site. H24 is a dihydroxyacetone phosphate binding site. Y95 is a beta-D-fructose 1,6-bisphosphate binding site. Residue Q99 coordinates Mg(2+). 108 to 109 (GN) contributes to the beta-D-fructose 1,6-bisphosphate binding site. Mg(2+) is bound at residue D136. K137 contacts beta-D-fructose 1,6-bisphosphate. Residue K137 coordinates dihydroxyacetone phosphate. Residue Y233 is the Proton donor/acceptor; for FBP aldolase activity of the active site. Residues K236, D237, and D238 each coordinate Mg(2+). K236 (schiff-base intermediate with DHAP; for FBP aldolase activity) is an active-site residue. Residues 246 to 247 (QS), R270, D291, and Y352 each bind beta-D-fructose 1,6-bisphosphate. R270 and D291 together coordinate dihydroxyacetone phosphate.

The protein belongs to the FBP aldolase/phosphatase family. In terms of assembly, homooctamer; dimer of tetramers. Requires Mg(2+) as cofactor.

It carries out the reaction beta-D-fructose 1,6-bisphosphate + H2O = beta-D-fructose 6-phosphate + phosphate. The enzyme catalyses beta-D-fructose 1,6-bisphosphate = D-glyceraldehyde 3-phosphate + dihydroxyacetone phosphate. It functions in the pathway carbohydrate biosynthesis; gluconeogenesis. Catalyzes two subsequent steps in gluconeogenesis: the aldol condensation of dihydroxyacetone phosphate (DHAP) and glyceraldehyde-3-phosphate (GA3P) to fructose-1,6-bisphosphate (FBP), and the dephosphorylation of FBP to fructose-6-phosphate (F6P). This Methanocaldococcus jannaschii (strain ATCC 43067 / DSM 2661 / JAL-1 / JCM 10045 / NBRC 100440) (Methanococcus jannaschii) protein is Fructose-1,6-bisphosphate aldolase/phosphatase.